A 548-amino-acid chain; its full sequence is Probable malate:quinone oxidoreductase (548 aa).

The interval 522–548 (KPQAADSTPKAQLKPQPARKEVADIAL) is disordered. The segment covering 539 to 548 (ARKEVADIAL) has biased composition (basic and acidic residues).

This sequence belongs to the MQO family. The cofactor is FAD.

It catalyses the reaction (S)-malate + a quinone = a quinol + oxaloacetate. The protein operates within carbohydrate metabolism; tricarboxylic acid cycle; oxaloacetate from (S)-malate (quinone route): step 1/1. The chain is Probable malate:quinone oxidoreductase from Escherichia fergusonii (strain ATCC 35469 / DSM 13698 / CCUG 18766 / IAM 14443 / JCM 21226 / LMG 7866 / NBRC 102419 / NCTC 12128 / CDC 0568-73).